The sequence spans 71 residues: Small ribosomal subunit protein bS21 (71 aa).

It belongs to the bacterial ribosomal protein bS21 family.

This is Small ribosomal subunit protein bS21 from Shewanella woodyi (strain ATCC 51908 / MS32).